A 468-amino-acid chain; its full sequence is Envelope glycoprotein C (468 aa).

A signal peptide spans 1 to 30 (MWLPNLVRFVAVAYLICAGAILTYASGASA). Residues 31–50 (SSSQSTPATPTHTTPNLTTA) are compositionally biased toward low complexity. Residues 31–73 (SSSQSTPATPTHTTPNLTTAHGAGSDNTTNANGTESTHSHETT) are disordered. The Virion surface portion of the chain corresponds to 31–431 (SSSQSTPATP…IVEDRPVLTS (401 aa)). N-linked (GlcNAc...) asparagine; by host glycans are attached at residues Asn-46, Asn-57, Asn-62, Asn-92, Asn-100, Asn-131, Asn-203, Asn-208, and Asn-269. Cysteines 76 and 93 form a disulfide. 2 consecutive Ig-like domains span residues 220-311 (PLLD…DEVS) and 321-416 (PSVF…DTVV). Intrachain disulfides connect Cys-239–Cys-301, Cys-340–Cys-399, and Cys-344–Cys-373. The chain crosses the membrane as a helical span at residues 432-451 (IIAVTCGAAALALVVLITAV). Residues 452–468 (CFYCSKPSQAPYKKSDF) are Cytoplasmic-facing.

This sequence belongs to the herpesviridae glycoprotein C family. As to quaternary structure, interacts with host complement component C3; this interaction inhibits host immune response by disregulating complement cascade.

Its subcellular location is the virion membrane. In terms of biological role, essential for the initial attachment to heparan sulfate moieties of the host cell surface proteoglycans. Also plays a role in host immune evasion by inhibiting the host complement cascade activation. The sequence is that of Envelope glycoprotein C (gC) from Equus caballus (Horse).